Consider the following 257-residue polypeptide: Putative hydro-lyase Bcep18194_B2576 (257 aa).

This sequence belongs to the D-glutamate cyclase family.

This is Putative hydro-lyase Bcep18194_B2576 from Burkholderia lata (strain ATCC 17760 / DSM 23089 / LMG 22485 / NCIMB 9086 / R18194 / 383).